Here is a 208-residue protein sequence, read N- to C-terminus: MAQVMISQHPLVQHKLTLLRRATTEPKKFRELVRELSQFLLYEATLDLPLQERIVDTPLAPYHGHRIAERVGLVPILRAGLGMVDPILDLIPTAHVWHLGLYRDHATLKPVTYYNKLPPEVDVDLCLVLDPMLATGGSAVAAVTVLKEWGASRIKFLGLIAAPEGVQALHQEHPDVPIHLAAIDDCLNDHGYIVPGLGDAGDRLFGTG.

Residues R78, R103, and 130–138 (DPMLATGGS) each bind 5-phospho-alpha-D-ribose 1-diphosphate. Uracil contacts are provided by residues I193 and 198 to 200 (GDA). Residue D199 participates in 5-phospho-alpha-D-ribose 1-diphosphate binding.

Belongs to the UPRTase family. Requires Mg(2+) as cofactor.

It catalyses the reaction UMP + diphosphate = 5-phospho-alpha-D-ribose 1-diphosphate + uracil. It functions in the pathway pyrimidine metabolism; UMP biosynthesis via salvage pathway; UMP from uracil: step 1/1. Its activity is regulated as follows. Allosterically activated by GTP. Catalyzes the conversion of uracil and 5-phospho-alpha-D-ribose 1-diphosphate (PRPP) to UMP and diphosphate. The sequence is that of Uracil phosphoribosyltransferase from Roseiflexus sp. (strain RS-1).